Reading from the N-terminus, the 196-residue chain is Proteasome subunit beta 2 (196 aa).

Residues 1–6 (MEELPS) constitute a propeptide, removed in mature form; by autocatalysis. Residue Thr7 is the Nucleophile of the active site.

This sequence belongs to the peptidase T1B family. The 20S proteasome core is composed of 14 alpha and 14 beta subunits that assemble into four stacked heptameric rings, resulting in a barrel-shaped structure. The two inner rings, each composed of seven catalytic beta subunits, are sandwiched by two outer rings, each composed of seven alpha subunits. The catalytic chamber with the active sites is on the inside of the barrel. Has a gated structure, the ends of the cylinder being occluded by the N-termini of the alpha-subunits. Is capped at one or both ends by the proteasome regulatory ATPase, PAN.

The protein resides in the cytoplasm. It carries out the reaction Cleavage of peptide bonds with very broad specificity.. Its activity is regulated as follows. The formation of the proteasomal ATPase PAN-20S proteasome complex, via the docking of the C-termini of PAN into the intersubunit pockets in the alpha-rings, triggers opening of the gate for substrate entry. Interconversion between the open-gate and close-gate conformations leads to a dynamic regulation of the 20S proteasome proteolysis activity. Functionally, component of the proteasome core, a large protease complex with broad specificity involved in protein degradation. The chain is Proteasome subunit beta 2 from Metallosphaera sedula (strain ATCC 51363 / DSM 5348 / JCM 9185 / NBRC 15509 / TH2).